A 185-amino-acid polypeptide reads, in one-letter code: Ribosome-recycling factor (185 aa).

It belongs to the RRF family.

The protein resides in the cytoplasm. In terms of biological role, responsible for the release of ribosomes from messenger RNA at the termination of protein biosynthesis. May increase the efficiency of translation by recycling ribosomes from one round of translation to another. The sequence is that of Ribosome-recycling factor from Buchnera aphidicola subsp. Acyrthosiphon pisum (strain APS) (Acyrthosiphon pisum symbiotic bacterium).